The primary structure comprises 109 residues: Tyrosine-protein phosphatase 16 (109 aa).

In terms of domain architecture, Tyrosine-protein phosphatase spans 1–109; it reads WRMVTEHTST…RIKTQKPIVV (109 aa). A substrate-binding site is contributed by Asp-81.

The protein belongs to the protein-tyrosine phosphatase family.

It carries out the reaction O-phospho-L-tyrosyl-[protein] + H2O = L-tyrosyl-[protein] + phosphate. The sequence is that of Tyrosine-protein phosphatase 16 (STY-16) from Styela plicata (Wrinkled sea squirt).